The chain runs to 67 residues: Putative selenoprotein YdfZ (67 aa).

Position 52 is an S-selanylcysteine (Cys52).

This chain is Putative selenoprotein YdfZ (ydfZ), found in Escherichia coli O6:H1 (strain CFT073 / ATCC 700928 / UPEC).